A 635-amino-acid chain; its full sequence is Histone-lysine N-methyltransferase Su(var)3-9 (635 aa).

Positions 81 to 188 (ERLSEKKIKN…LNGFAKLKRR (108 aa)) are binds to Su(var)205 and Suvar(3)7. Disordered regions lie at residues 123–161 (RLCTKPASSSMPASTSSVDRRTTRRSTSQTSLSPSNSSG) and 191–210 (SCVGAPTPNSKRSKNNMGVI). 2 stretches are compositionally biased toward low complexity: residues 128 to 139 (PASSSMPASTSS) and 147 to 161 (RSTSQTSLSPSNSSG). One can recognise a Chromo domain in the interval 219–278 (YVVERIECVEMDQYQPVFFVKWLGYHDSENTWESLANVADCAEMEKFVERHQQLYETYIA). The 65-residue stretch at 410 to 474 (VGCKCTEDTE…SCSNRLVQHG (65 aa)) folds into the Pre-SET domain. Zn(2+)-binding residues include cysteine 412, cysteine 414, cysteine 421, cysteine 427, cysteine 428, cysteine 456, cysteine 460, cysteine 462, and cysteine 466. The 127-residue stretch at 477 to 603 (VPLVLFKTAN…AGEELSFDYI (127 aa)) folds into the SET domain. S-adenosyl-L-methionine contacts are provided by residues 488 to 490 (SGW), tyrosine 531, and 560 to 561 (NH). Zn(2+) contacts are provided by cysteine 563, cysteine 623, cysteine 625, and cysteine 630. The Post-SET domain maps to 619–635 (VRVECRCGRDNCRKVLF).

It belongs to the class V-like SAM-binding methyltransferase superfamily. Histone-lysine methyltransferase family. Suvar3-9 subfamily. In terms of assembly, interacts with Su(var)205 and Su(var)3-7. Probably associates with HDAC1/Rpd3. Interacts with Rrp6; the interaction promotes association of Rrp6 with a subset of genomic loci.

Its subcellular location is the nucleus. It is found in the chromosome. The protein localises to the centromere. It carries out the reaction L-lysyl(9)-[histone H3] + 3 S-adenosyl-L-methionine = N(6),N(6),N(6)-trimethyl-L-lysyl(9)-[histone H3] + 3 S-adenosyl-L-homocysteine + 3 H(+). Its function is as follows. Histone methyltransferase that specifically trimethylates 'Lys-9' of histone H3 using monomethylated H3 'Lys-9' as substrate. H3 'Lys-9' trimethylation represents a specific tag for epigenetic transcriptional repression by recruiting Su(var)205/HP1 to methylated histones. Mainly functions in heterochromatin regions, thereby playing a central role in the establishment of constitutive heterochromatin at pericentric regions. Involved in heterochromatic gene silencing including the modification of position-effect-variegation. This Drosophila melanogaster (Fruit fly) protein is Histone-lysine N-methyltransferase Su(var)3-9 (Su(var)3-9).